We begin with the raw amino-acid sequence, 544 residues long: Aspartokinase 2, chloroplastic (544 aa).

A chloroplast-targeting transit peptide spans 1-84 (MASLQLYGVK…SSGTGKELTC (84 aa)). ATP-binding residues include K87, G90, and S119. E203 provides a ligand contact to substrate. ACT domains lie at 401–479 (IAST…RRSI) and 481–544 (SLIG…ETDP).

It belongs to the aspartokinase family. In terms of tissue distribution, expressed in stems, leaves, floral organs and young seedlings.

The protein localises to the plastid. It is found in the chloroplast. It catalyses the reaction L-aspartate + ATP = 4-phospho-L-aspartate + ADP. It participates in amino-acid biosynthesis; L-lysine biosynthesis via DAP pathway; (S)-tetrahydrodipicolinate from L-aspartate: step 1/4. Its pathway is amino-acid biosynthesis; L-methionine biosynthesis via de novo pathway; L-homoserine from L-aspartate: step 1/3. The protein operates within amino-acid biosynthesis; L-threonine biosynthesis; L-threonine from L-aspartate: step 1/5. With respect to regulation, allosterically inhibited by lysine, but not by S-adenosyl-L-methionine (SAM). K(0.5) for lysine in the presence of physiological concentrations of substrates is 12.5 uM. No inhibition by threonine or leucine and no activation or inhibition by alanine, cysteine, isoleucine, serine, valine, methionine, glutamine, asparagine, glutamic acid or arginine. In terms of biological role, involved in the first step of essential amino acids lysine, threonine, methionine and isoleucine synthesis via the aspartate-family pathway. The chain is Aspartokinase 2, chloroplastic (AK2) from Arabidopsis thaliana (Mouse-ear cress).